Reading from the N-terminus, the 396-residue chain is MQNMVILGATGSIGASTLSVISANPDAYRVYALVANASVDKMLALCVTHRPQVAHMVDSQAALALQAKLPPELNIQVSSGEDELIALVTATEVDTVMAAIVGAAGLVPTLAAVKAGKRVLLANKEALVMSGELFIEATKASGATLLPVDSEHNAIFQCLPEEVQANLGRCDLAASGISHILLTGSGGPFLTAELASLAAMTPAQACKHPNWSMGPKISVDSATMMNKGLEFIEARWLFNTQNDQLKVVIHPQSVIHSMVQYRDGSVIAQMGNPDMRTPIAHCMSYPQRISSGVEPLDFFKVGQLSFCEPDFNRFPCLALAIAACAQGQEATTVLNAANEIAVEAFLQGQIGFTHIAKVNEACLSSVPKRAMTSIDDIIALDAQTRIYAREQLAKLA.

NADPH contacts are provided by Thr10, Gly11, Ser12, Ile13, and Asn123. Lys124 lines the 1-deoxy-D-xylulose 5-phosphate pocket. Glu125 is a binding site for NADPH. Position 149 (Asp149) interacts with Mn(2+). 1-deoxy-D-xylulose 5-phosphate contacts are provided by Ser150, Glu151, Ser185, and His208. Glu151 serves as a coordination point for Mn(2+). Residue Gly214 participates in NADPH binding. Residues Ser221, Asn226, Lys227, and Glu230 each contribute to the 1-deoxy-D-xylulose 5-phosphate site. Glu230 provides a ligand contact to Mn(2+).

The protein belongs to the DXR family. Mg(2+) is required as a cofactor. The cofactor is Mn(2+).

The catalysed reaction is 2-C-methyl-D-erythritol 4-phosphate + NADP(+) = 1-deoxy-D-xylulose 5-phosphate + NADPH + H(+). It participates in isoprenoid biosynthesis; isopentenyl diphosphate biosynthesis via DXP pathway; isopentenyl diphosphate from 1-deoxy-D-xylulose 5-phosphate: step 1/6. In terms of biological role, catalyzes the NADPH-dependent rearrangement and reduction of 1-deoxy-D-xylulose-5-phosphate (DXP) to 2-C-methyl-D-erythritol 4-phosphate (MEP). The polypeptide is 1-deoxy-D-xylulose 5-phosphate reductoisomerase (Shewanella sp. (strain MR-7)).